A 732-amino-acid chain; its full sequence is Catalase-peroxidase (732 aa).

The tryptophyl-tyrosyl-methioninium (Trp-Tyr) (with M-246) cross-link spans 97–220 (WHSAGTYRTS…LAAVQMGLIY (124 aa)). The active-site Proton acceptor is His-98. Residues 220-246 (YVNPEGPDGNPDPVAAGRDIRETFARM) constitute a cross-link (tryptophyl-tyrosyl-methioninium (Tyr-Met) (with W-97)). Residue His-261 coordinates heme b.

The protein belongs to the peroxidase family. Peroxidase/catalase subfamily. In terms of assembly, homodimer or homotetramer. The cofactor is heme b. Formation of the three residue Trp-Tyr-Met cross-link is important for the catalase, but not the peroxidase activity of the enzyme.

It carries out the reaction H2O2 + AH2 = A + 2 H2O. It catalyses the reaction 2 H2O2 = O2 + 2 H2O. Functionally, bifunctional enzyme with both catalase and broad-spectrum peroxidase activity. The sequence is that of Catalase-peroxidase from Pelodictyon phaeoclathratiforme (strain DSM 5477 / BU-1).